The sequence spans 427 residues: Histidinol dehydrogenase (427 aa).

Substrate-binding residues include Ser-232, Gln-254, and His-257. Residues Gln-254 and His-257 each coordinate Zn(2+). Residues Glu-322 and His-323 each act as proton acceptor in the active site. The substrate site is built by His-323, Asp-356, Glu-410, and His-415. Asp-356 contributes to the Zn(2+) binding site. His-415 contributes to the Zn(2+) binding site.

It belongs to the histidinol dehydrogenase family. It depends on Zn(2+) as a cofactor.

It carries out the reaction L-histidinol + 2 NAD(+) + H2O = L-histidine + 2 NADH + 3 H(+). It functions in the pathway amino-acid biosynthesis; L-histidine biosynthesis; L-histidine from 5-phospho-alpha-D-ribose 1-diphosphate: step 9/9. Catalyzes the sequential NAD-dependent oxidations of L-histidinol to L-histidinaldehyde and then to L-histidine. This chain is Histidinol dehydrogenase, found in Listeria monocytogenes serovar 1/2a (strain ATCC BAA-679 / EGD-e).